We begin with the raw amino-acid sequence, 56 residues long: MSRKKKKVLVKLVSSAGTGVFWVKQRNPKTQTEKLSFRKYDPKVRKHVQFTEAKIK.

Belongs to the bacterial ribosomal protein bL33 family.

This is Large ribosomal subunit protein bL33 from Orientia tsutsugamushi (strain Ikeda) (Rickettsia tsutsugamushi).